Reading from the N-terminus, the 479-residue chain is F-box protein SKIP17 (479 aa).

The 47-residue stretch at asparagine 92–isoleucine 138 folds into the F-box domain. Positions glutamate 435–leucine 479 are disordered. The segment covering methionine 437–methionine 469 has biased composition (acidic residues).

As to quaternary structure, part of a SCF (ASK-cullin-F-box) protein ligase complex. Interacts with SPK1B/ASK2.

It localises to the nucleus. Its pathway is protein modification; protein ubiquitination. Component of SCF(ASK-cullin-F-box) E3 ubiquitin ligase complexes, which may mediate the ubiquitination and subsequent proteasomal degradation of target proteins. The sequence is that of F-box protein SKIP17 (SKIP17) from Arabidopsis thaliana (Mouse-ear cress).